A 413-amino-acid polypeptide reads, in one-letter code: 2,3-diketo-5-methylthiopentyl-1-phosphate enolase (413 aa).

Lys-98 acts as the Proton acceptor in catalysis. Residues Lys-147, 173–176, His-264, Gly-337, and 359–360 each bind substrate; these read KDDE and GG. 3 residues coordinate Mg(2+): Lys-173, Asp-175, and Glu-176. Lys-173 is subject to N6-carboxylysine.

The protein belongs to the RuBisCO large chain family. Type IV subfamily. Homodimer. It depends on Mg(2+) as a cofactor.

The enzyme catalyses 5-methylsulfanyl-2,3-dioxopentyl phosphate = 2-hydroxy-5-methylsulfanyl-3-oxopent-1-enyl phosphate. It participates in amino-acid biosynthesis; L-methionine biosynthesis via salvage pathway; L-methionine from S-methyl-5-thio-alpha-D-ribose 1-phosphate: step 3/6. Functionally, catalyzes the enolization of 2,3-diketo-5-methylthiopentyl-1-phosphate (DK-MTP-1-P) into 2-hydroxy-3-keto-5-methylthiopentenyl-1-phosphate (HK-MTPenyl-1-P). The polypeptide is 2,3-diketo-5-methylthiopentyl-1-phosphate enolase (Geobacillus thermodenitrificans (strain NG80-2)).